Here is a 98-residue protein sequence, read N- to C-terminus: Aspartyl/glutamyl-tRNA(Asn/Gln) amidotransferase subunit C (98 aa).

The tract at residues 70-98 (PSLTPEQALSGAPAQEQQRFKVPQILGED) is disordered.

The protein belongs to the GatC family. As to quaternary structure, heterotrimer of A, B and C subunits.

It catalyses the reaction L-glutamyl-tRNA(Gln) + L-glutamine + ATP + H2O = L-glutaminyl-tRNA(Gln) + L-glutamate + ADP + phosphate + H(+). The enzyme catalyses L-aspartyl-tRNA(Asn) + L-glutamine + ATP + H2O = L-asparaginyl-tRNA(Asn) + L-glutamate + ADP + phosphate + 2 H(+). Its function is as follows. Allows the formation of correctly charged Asn-tRNA(Asn) or Gln-tRNA(Gln) through the transamidation of misacylated Asp-tRNA(Asn) or Glu-tRNA(Gln) in organisms which lack either or both of asparaginyl-tRNA or glutaminyl-tRNA synthetases. The reaction takes place in the presence of glutamine and ATP through an activated phospho-Asp-tRNA(Asn) or phospho-Glu-tRNA(Gln). This Streptomyces avermitilis (strain ATCC 31267 / DSM 46492 / JCM 5070 / NBRC 14893 / NCIMB 12804 / NRRL 8165 / MA-4680) protein is Aspartyl/glutamyl-tRNA(Asn/Gln) amidotransferase subunit C.